A 464-amino-acid polypeptide reads, in one-letter code: Argininosuccinate lyase (464 aa).

The protein belongs to the lyase 1 family. Argininosuccinate lyase subfamily.

The protein resides in the cytoplasm. The enzyme catalyses 2-(N(omega)-L-arginino)succinate = fumarate + L-arginine. It functions in the pathway amino-acid biosynthesis; L-arginine biosynthesis; L-arginine from L-ornithine and carbamoyl phosphate: step 3/3. The protein is Argininosuccinate lyase of Sulfurovum sp. (strain NBC37-1).